The primary structure comprises 199 residues: Probable GTP-binding protein EngB (199 aa).

In terms of domain architecture, EngB-type G spans 28–199; sequence DLPEIALAGR…DSWDAILEQV (172 aa). GTP-binding positions include 36–43, 63–67, 81–84, 148–151, and 180–182; these read GRSNVGKS, GKTQL, DVPG, TKAD, and FSS. Residues serine 43 and threonine 65 each contribute to the Mg(2+) site.

It belongs to the TRAFAC class TrmE-Era-EngA-EngB-Septin-like GTPase superfamily. EngB GTPase family. The cofactor is Mg(2+).

Its function is as follows. Necessary for normal cell division and for the maintenance of normal septation. This chain is Probable GTP-binding protein EngB, found in Streptococcus pyogenes serotype M18 (strain MGAS8232).